A 507-amino-acid polypeptide reads, in one-letter code: Proton-coupled zinc antiporter SLC30A1 (507 aa).

Over 1 to 10 the chain is Cytoplasmic; it reads MGCWGRNRGR. A helical membrane pass occupies residues 11 to 31; sequence LLCMLALTFMFMVLEVVVSRV. The Extracellular segment spans residues 32–35; the sequence is TSSL. Residues 36–56 form a helical membrane-spanning segment; sequence AMLSDSFHMLSDVLALVVALV. Zn(2+) contacts are provided by H43 and D47. The Cytoplasmic segment spans residues 57–78; that stretch reads AERFARRTHATQKNTFGWIRAE. Residues 79 to 99 form a helical membrane-spanning segment; the sequence is VMGALVNAIFLTGLCFAILLE. Residues 100–113 are Extracellular-facing; it reads AIERFIEPHEMQQP. Residues 114–134 form a helical membrane-spanning segment; sequence LVVLGVGVAGLLVNVLGLCLF. At 135–248 the chain is on the cytoplasmic side; the sequence is HHHSGFSQDS…RAGQLNMRGV (114 aa). The disordered stretch occupies residues 142–217; that stretch reads QDSGHGHSHG…DPENPRSGDT (76 aa). Residues 146–158 are 6 X 2 AA approximate repeats of H-G; sequence HGHSHGGHGHGHG. Over residues 147-167 the composition is skewed to basic residues; it reads GHSHGGHGHGHGLPKGPRVKS. A compositionally biased stretch (polar residues) spans 189–201; the sequence is TNTLVANTSNSNG. A helical transmembrane segment spans residues 249–269; that stretch reads FLHVLGDALGSVIVVVNALVF. The Zn(2+) site is built by H251 and D255. At 270–308 the chain is on the extracellular side; the sequence is YFSWKGCSEGDFCVNPCFPDPCKAFVEIINSTHASVYEA. N-linked (GlcNAc...) asparagine glycosylation occurs at N299. A helical membrane pass occupies residues 309 to 329; the sequence is GPCWVLYLDPTLCVVMVCILL. Over 330–507 the chain is Cytoplasmic; it reads YTTYPLLKES…MPNKQPESSL (178 aa). At S506 the chain carries Phosphoserine.

Belongs to the cation diffusion facilitator (CDF) transporter (TC 2.A.4) family. SLC30A subfamily. In terms of assembly, homodimer. Interacts with TMEM163. Interacts and forms a complex with TMC6 and TMC8; the interaction regulates zinc transport into the ER. (Microbial infection) Interacts with human papillomavirus 16/HPV16 protein E5; the interaction alleviates SLC30A1-mediated transcription factors inhibition. In terms of processing, N-glycosylated at Asn-299. N-glycosylation promotes endocytosis and degradation through the proteasomal or lysosomal pathways.

It is found in the cell membrane. Its subcellular location is the basolateral cell membrane. The protein localises to the cytoplasmic vesicle membrane. The protein resides in the cytoplasm. It localises to the endoplasmic reticulum membrane. It is found in the golgi apparatus membrane. Its subcellular location is the nucleus membrane. The enzyme catalyses Zn(2+)(in) + 2 H(+)(out) = Zn(2+)(out) + 2 H(+)(in). Functionally, zinc ion:proton antiporter that could function at the plasma membrane mediating zinc efflux from cells against its electrochemical gradient protecting them from intracellular zinc accumulation and toxicity. Alternatively, could prevent the transport to the plasma membrane of CACNB2, the L-type calcium channels regulatory subunit, through a yet to be defined mechanism. By modulating the expression of these channels at the plasma membrane, could prevent calcium and zinc influx into cells. By the same mechanism, could also prevent L-type calcium channels-mediated heavy metal influx into cells. In some cells, could also function as a zinc ion:proton antiporter mediating zinc entry into the lumen of cytoplasmic vesicles. In macrophages, can increase zinc ions concentration into the lumen of cytoplasmic vesicles containing engulfed bacteria and could help inactivate them. Forms a complex with TMC6/EVER1 and TMC8/EVER2 at the ER membrane of keratynocytes which facilitates zinc uptake into the ER. Down-regulates the activity of transcription factors induced by zinc and cytokines. This Homo sapiens (Human) protein is Proton-coupled zinc antiporter SLC30A1.